We begin with the raw amino-acid sequence, 190 residues long: Putative resolvase R771 (190 aa).

The H-T-H motif DNA-binding region spans 11–30 (SSVLGVHQRTLYQWDKKGWI). Positions 61–190 (LSICYVRVSS…RNGLKKYSNK (130 aa)) constitute a Resolvase/invertase-type recombinase catalytic domain. Positions 66 to 92 (VRVSSNNQKDDLERQIKFMKKKYPNHT) form a coiled coil. Residue serine 69 is the O-(5'-phospho-DNA)-serine intermediate of the active site.

Belongs to the site-specific recombinase resolvase family.

Its function is as follows. Resolvase catalyzes the resolution (a site-specific recombination) of the cointegrated replicon to yield the final transposition products. The protein is Putative resolvase R771 of Acanthamoeba polyphaga (Amoeba).